Consider the following 1098-residue polypeptide: Bifunctional helicase and thymine dioxygenase JBP2 (1098 aa).

The segment at 1–540 (MLNGLTRVST…PPLFVPTRLA (540 aa)) is thymine dioxygenase. 3 residues coordinate Fe cation: H415, D417, and H465. 2-oxoglutarate is bound at residue R479. Residues 541 to 1098 (SHLAPVQLAA…RYQESVRESE (558 aa)) form a DNA Helicase region. One can recognise a Helicase ATP-binding domain in the interval 555–730 (VERTEKQSGC…YRLVGWVNKG (176 aa)). 568–575 (MTMGLGKT) contacts ATP. The DEAH box signature appears at 681–684 (DEGH). Positions 897–1057 (VLVDIVLRVQ…ALPDELEDCA (161 aa)) constitute a Helicase C-terminal domain.

It in the C-terminal section; belongs to the SNF2/RAD54 helicase family. This sequence in the N-terminal section; belongs to the TET family. JBP2 subfamily. The cofactor is Fe(2+).

Its subcellular location is the nucleus. The enzyme catalyses ATP + H2O = ADP + phosphate + H(+). It carries out the reaction thymine + 2-oxoglutarate + O2 = 5-hydroxymethyluracil + succinate + CO2. Its function is as follows. Dioxygenase that catalyzes the first step of DNA base J (beta-d-glucosyl-HOMedU) biosynthesis by converting thymine to 5-hydroxymethyluracil (HOMedU). DNA base J is a hypermodified thymidine residue found in the genome of kinetoplastid parasites, which is localized primarily to repetitive DNA, namely the telomeres, and is implicated in the regulation of antigenic variation. Probably also acts as a DNA helicase. Recognizes and binds specific regions of the genome, hydrolyzes ATP and allows the DNA base J de novo synthesis. Involved in initial synthesis of DNA base J, JBP1 being able to act via the basal level of DNA base J and propagate further synthesis. In contrast to JBP1, it does not specifically bind DNA base J, however it binds chromatin. The polypeptide is Bifunctional helicase and thymine dioxygenase JBP2 (JBP2) (Leishmania tarentolae (Sauroleishmania tarentolae)).